Here is a 260-residue protein sequence, read N- to C-terminus: Small ribosomal subunit protein uS2 (260 aa).

Residues Arg228–Met240 show a composition bias toward basic and acidic residues. Residues Arg228–Glu260 are disordered. Residues Lys241–Glu260 are compositionally biased toward low complexity.

Belongs to the universal ribosomal protein uS2 family.

This is Small ribosomal subunit protein uS2 from Oleidesulfovibrio alaskensis (strain ATCC BAA-1058 / DSM 17464 / G20) (Desulfovibrio alaskensis).